The sequence spans 457 residues: Ribosomal protein uS12 methylthiotransferase RimO (457 aa).

The MTTase N-terminal domain maps to 6–116 (PKVGFVSLGC…VMEAVHAALP (111 aa)). Residues Cys15, Cys51, Cys80, Cys147, Cys151, and Cys154 each contribute to the [4Fe-4S] cluster site. Residues 133 to 370 (LTPRHYAYLK…MARQAEISAA (238 aa)) enclose the Radical SAM core domain. The TRAM domain maps to 373 to 441 (EAKIGSVQQC…EHDLFGDALP (69 aa)).

This sequence belongs to the methylthiotransferase family. RimO subfamily. [4Fe-4S] cluster serves as cofactor.

It is found in the cytoplasm. The catalysed reaction is L-aspartate(89)-[ribosomal protein uS12]-hydrogen + (sulfur carrier)-SH + AH2 + 2 S-adenosyl-L-methionine = 3-methylsulfanyl-L-aspartate(89)-[ribosomal protein uS12]-hydrogen + (sulfur carrier)-H + 5'-deoxyadenosine + L-methionine + A + S-adenosyl-L-homocysteine + 2 H(+). In terms of biological role, catalyzes the methylthiolation of an aspartic acid residue of ribosomal protein uS12. In Xanthomonas campestris pv. campestris (strain 8004), this protein is Ribosomal protein uS12 methylthiotransferase RimO.